Here is an 877-residue protein sequence, read N- to C-terminus: Leucine--tRNA ligase (877 aa).

The 'HIGH' region signature appears at 50-60 (PYPSGKLHMGH). Positions 634 to 638 (KMSKS) match the 'KMSKS' region motif. Residue Lys637 coordinates ATP.

This sequence belongs to the class-I aminoacyl-tRNA synthetase family.

The protein resides in the cytoplasm. It catalyses the reaction tRNA(Leu) + L-leucine + ATP = L-leucyl-tRNA(Leu) + AMP + diphosphate. This is Leucine--tRNA ligase from Hydrogenovibrio crunogenus (strain DSM 25203 / XCL-2) (Thiomicrospira crunogena).